A 297-amino-acid polypeptide reads, in one-letter code: Formylmethanofuran--tetrahydromethanopterin formyltransferase (297 aa).

The protein belongs to the FTR family. In terms of assembly, homotetramer.

It localises to the cytoplasm. It carries out the reaction N-formylmethanofuran + 5,6,7,8-tetrahydromethanopterin + H(+) = N(5)-formyl-5,6,7,8-tetrahydromethanopterin + methanofuran. It functions in the pathway one-carbon metabolism; methanogenesis from CO(2); 5,10-methenyl-5,6,7,8-tetrahydromethanopterin from CO(2): step 2/3. Its function is as follows. Catalyzes the reversible transfer of a formyl group from formylmethanofuran (formyl-MFR) to tetrahydromethanopterin (H(4)MPT) to produce 5-formyl tetrahydromethanopterin (5-formyl-H(4)MPT) and methanofuran (MFR). The polypeptide is Formylmethanofuran--tetrahydromethanopterin formyltransferase (Methanothermobacter thermautotrophicus (strain ATCC 29096 / DSM 1053 / JCM 10044 / NBRC 100330 / Delta H) (Methanobacterium thermoautotrophicum)).